Reading from the N-terminus, the 214-residue chain is Large ribosomal subunit protein uL3 (214 aa).

Glutamine 151 carries the post-translational modification N5-methylglutamine.

This sequence belongs to the universal ribosomal protein uL3 family. As to quaternary structure, part of the 50S ribosomal subunit. Forms a cluster with proteins L14 and L19. Post-translationally, methylated by PrmB.

Its function is as follows. One of the primary rRNA binding proteins, it binds directly near the 3'-end of the 23S rRNA, where it nucleates assembly of the 50S subunit. The chain is Large ribosomal subunit protein uL3 from Magnetococcus marinus (strain ATCC BAA-1437 / JCM 17883 / MC-1).